The sequence spans 525 residues: Vesicular inhibitory amino acid transporter (525 aa).

Over 1–132 (MATLLRSKLS…WNVTNAIQGM (132 aa)) the chain is Cytoplasmic. Residues 69 to 111 (PCGDEGAEPPVEGDIHYQRGSGAPLPPSGSKDQVGAGGEFGGH) are disordered. Residues 133–153 (FVLGLPYAILHGGYLGLFLII) traverse the membrane as a helical segment. At 154–204 (FAAVVCCYTGKILIACLYEENEDGEVVRVRDSYVAIANACCAPRFPTLGGR) the chain is on the lumenal, vesicle side. Tyrosine 186 is subject to 3'-nitrotyrosine. A helical transmembrane segment spans residues 205-225 (VVNVAQIIELVMTCILYVVVS). The Cytoplasmic portion of the chain corresponds to 226–265 (GNLMYNSFPGLPVSQKSWSIIATAVLLPCAFLKNLKAVSK). The helical transmembrane segment at 266–286 (FSLLCTLAHFVINILVIAYCL) threads the bilayer. Over 287–305 (SRARDWAWEKVKFYIDVKK) the chain is Lumenal, vesicle. A helical transmembrane segment spans residues 306–326 (FPISIGIIVFSYTSQIFLPSL). Residues 327 to 341 (EGNMQQPSEFHCMMN) lie on the Cytoplasmic side of the membrane. Residues 342 to 362 (WTHIAACVLKGLFALVAYLTW) form a helical membrane-spanning segment. Residues 363 to 383 (ADETKEVITDNLPGSIRAVVN) lie on the Lumenal, vesicle side of the membrane. Residues 384 to 404 (IFLVAKALLSYPLPFFAAVEV) form a helical membrane-spanning segment. Residues 405 to 438 (LEKSLFQEGSRAFFPACYGGDGRLKSWGLTLRCA) lie on the Cytoplasmic side of the membrane. Residues 439–459 (LVVFTLLMAIYVPHFALLMGL) traverse the membrane as a helical segment. The Lumenal, vesicle segment spans residues 460–461 (TG). A helical transmembrane segment spans residues 462 to 482 (SLTGAGLCFLLPSLFHLRLLW). Over 483 to 489 (RKLLWHQ) the chain is Cytoplasmic. Residues 490-510 (VFFDVAIFVIGGICSVSGFVH) form a helical membrane-spanning segment. Residues 511–525 (SLEGLIEAYRTNAED) lie on the Lumenal, vesicle side of the membrane.

Belongs to the amino acid/polyamine transporter 2 family.

It is found in the cytoplasmic vesicle membrane. The protein resides in the presynapse. The catalysed reaction is 4-aminobutanoate(out) + n H(+)(in) = 4-aminobutanoate(in) + n H(+)(out). It catalyses the reaction glycine(out) + n H(+)(in) = glycine(in) + n H(+)(out). The enzyme catalyses beta-alanine(out) + n H(+)(in) = beta-alanine(in) + n H(+)(out). Its function is as follows. Antiporter that exchanges vesicular protons for cytosolic 4-aminobutanoate or to a lesser extend glycine, thus allowing their secretion from nerve terminals. The transport is equally dependent on the chemical and electrical components of the proton gradient. May also transport beta-alanine. Acidification of GABAergic synaptic vesicles is a prerequisite for 4-aminobutanoate uptake. The chain is Vesicular inhibitory amino acid transporter from Macaca fascicularis (Crab-eating macaque).